The following is a 585-amino-acid chain: Glycerol-3-phosphate dehydrogenase (585 aa).

Residue 37-65 (DVVVIGGGVVGSGCALDAATRGLKVALVE) participates in FAD binding.

Belongs to the FAD-dependent glycerol-3-phosphate dehydrogenase family. It depends on FAD as a cofactor.

It is found in the cytoplasm. The enzyme catalyses a quinone + sn-glycerol 3-phosphate = dihydroxyacetone phosphate + a quinol. The protein is Glycerol-3-phosphate dehydrogenase (glpD) of Mycobacterium leprae (strain TN).